A 963-amino-acid polypeptide reads, in one-letter code: Importin-13 (963 aa).

HEAT repeat units follow at residues E24–V54, P56–R88, T95–M135, A142–T179, L194–Q231, L236–S268, V276–D325, W330–L372, E375–L438, A440–I476, V487–D522, P524–C558, L562–A600, V603–F648, P676–L716, F720–F754, F761–R803, V815–L845, E860–N893, and F897–L931. The Importin N-terminal domain maps to A45 to R111.

Belongs to the importin beta family. In terms of assembly, interacts with UBC9, RAN, RBM8A, eIF-1A and PAX6.

It localises to the cytoplasm. The protein resides in the nucleus. In terms of biological role, functions in nuclear protein import as nuclear transport receptor. Serves as receptor for nuclear localization signals (NLS) in cargo substrates. Is thought to mediate docking of the importin/substrate complex to the nuclear pore complex (NPC) through binding to nucleoporin and the complex is subsequently translocated through the pore by an energy requiring, Ran-dependent mechanism. At the nucleoplasmic side of the NPC, Ran binds to the importin, the importin/substrate complex dissociates and importin is re-exported from the nucleus to the cytoplasm where GTP hydrolysis releases Ran. The directionality of nuclear import is thought to be conferred by an asymmetric distribution of the GTP- and GDP-bound forms of Ran between the cytoplasm and nucleus. Mediates the nuclear import of UBC9, the RBM8A/MAGOH complex, PAX6 and probably other members of the paired homeobox family. Also mediates nuclear export of eIF-1A, and the cytoplasmic release of eIF-1A is triggered by the loading of import substrates onto IPO13. The sequence is that of Importin-13 (Ipo13) from Mus musculus (Mouse).